The chain runs to 240 residues: Ribonuclease HII (240 aa).

In terms of domain architecture, RNase H type-2 spans 27-226 (GPVAGVDEAG…REARSLRLED (200 aa)). Positions 33, 34, and 127 each coordinate a divalent metal cation.

Belongs to the RNase HII family. It depends on Mn(2+) as a cofactor. The cofactor is Mg(2+).

The protein localises to the cytoplasm. It carries out the reaction Endonucleolytic cleavage to 5'-phosphomonoester.. Endonuclease that specifically degrades the RNA of RNA-DNA hybrids. The chain is Ribonuclease HII from Frankia casuarinae (strain DSM 45818 / CECT 9043 / HFP020203 / CcI3).